Here is a 241-residue protein sequence, read N- to C-terminus: Guanosine phosphorylase (241 aa).

It belongs to the PNP/UDP phosphorylase family.

It catalyses the reaction guanosine + phosphate = alpha-D-ribose 1-phosphate + guanine. The enzyme catalyses a purine D-ribonucleoside + phosphate = a purine nucleobase + alpha-D-ribose 1-phosphate. The catalysed reaction is inosine + phosphate = alpha-D-ribose 1-phosphate + hypoxanthine. It carries out the reaction adenosine + phosphate = alpha-D-ribose 1-phosphate + adenine. Activity is higher at low KCl concentrations. Its function is as follows. Phosphorylase involved in the non-carboxylating pentose bisphosphate pathway, a nucleoside degradation pathway present in some halophilic archaea. Catalyzes the phosphorolytic cleavage of guanosine to guanine and ribose-1-phosphate (R1P). Exhibits the highest activity toward guanosine, but also shows lower activity against inosine and adenosine. The chain is Guanosine phosphorylase from Halorubrum lacusprofundi (strain ATCC 49239 / DSM 5036 / JCM 8891 / ACAM 34).